Here is a 377-residue protein sequence, read N- to C-terminus: MQTKTVTVKLDKHCYDIIIGPGLVAQAVWQIKHSLHKKDLHQTRFALVTDSNVASLHLDTLQAELTKNKIHTVPIIVEAGEQSKSFLTLQIVIDRILAARLERGDCVIAFGGGVIGDLGGFAASIIRRGMNFIQMPTTLLAQIDSSVGGKTGINSRYGKNLIGAFYQPQCVIADTCFLDTLPLREFRAGYAEIVKYGLISQPDFFEWLEKNWQKIFSNGPTRTEAIVRSCQFKADIVARDEHETGERALLNLGHTFGHMLETATAYDSNRLIHGEAVAIGMVLAHQFSAQLNLINPTLIQRVEAHLKAVGLPTQLKDIPGKLPEAETLMTLIAQDKKVSQNNLTFILTRGLGQSFIAKTVSPEAVLAFLEQKLAEIR.

Residues glycine 113–aspartate 117, threonine 137–threonine 138, lysine 150, lysine 159, and phenylalanine 177–threonine 180 each bind NAD(+). Zn(2+) is bound by residues glutamate 192, histidine 254, and histidine 273.

It belongs to the sugar phosphate cyclases superfamily. Dehydroquinate synthase family. The cofactor is Co(2+). Zn(2+) serves as cofactor. It depends on NAD(+) as a cofactor.

It localises to the cytoplasm. The enzyme catalyses 7-phospho-2-dehydro-3-deoxy-D-arabino-heptonate = 3-dehydroquinate + phosphate. It participates in metabolic intermediate biosynthesis; chorismate biosynthesis; chorismate from D-erythrose 4-phosphate and phosphoenolpyruvate: step 2/7. Its function is as follows. Catalyzes the conversion of 3-deoxy-D-arabino-heptulosonate 7-phosphate (DAHP) to dehydroquinate (DHQ). The polypeptide is 3-dehydroquinate synthase (Bartonella quintana (strain Toulouse) (Rochalimaea quintana)).